We begin with the raw amino-acid sequence, 85 residues long: Large ribosomal subunit protein bL27 (85 aa).

A compositionally biased stretch (gly residues) spans 1–10; that stretch reads MAQKKGGGST. Positions 1–21 are disordered; the sequence is MAQKKGGGSTRNGRDSQPKML.

This sequence belongs to the bacterial ribosomal protein bL27 family.

In Polaromonas naphthalenivorans (strain CJ2), this protein is Large ribosomal subunit protein bL27.